Reading from the N-terminus, the 286-residue chain is uncharacterized protein (286 aa).

The segment at Tyr152–Thr182 is disordered. A helical transmembrane segment spans residues Val198–Glu218. The tract at residues Arg239–Ile278 is disordered. Over residues Gln247 to Thr257 the composition is skewed to polar residues.

The protein localises to the membrane. This is an uncharacterized protein from Bos taurus (Bovine).